A 325-amino-acid chain; its full sequence is Melanocortin receptor 5 (325 aa).

The Extracellular segment spans residues 1–37; it reads MNSSFHLHFLDLGLNTTDGNLSGLSVQNASSLCEDMG. Residues Asn2, Asn15, Asn20, and Asn28 are each glycosylated (N-linked (GlcNAc...) asparagine). Residues 38-61 traverse the membrane as a helical segment; the sequence is IAVEVFLALGLISLLENILVIGAI. The Cytoplasmic portion of the chain corresponds to 62–73; sequence VRNRNLHTPMYF. The chain crosses the membrane as a helical span at residues 74-97; the sequence is FVGSLAVADMLVSLSNSWETITIY. The Extracellular segment spans residues 98–114; it reads LLTNKHLVMADASVRHL. Residues 115-138 form a helical membrane-spanning segment; sequence DNVFDSMICISVVASMCSLLAIAV. The Cytoplasmic segment spans residues 139–155; that stretch reads DRYVTIFCALRYQRIMT. Residues 156–179 traverse the membrane as a helical segment; it reads GRRSGAIIGGIWAFCASCGTVFIV. The Extracellular segment spans residues 180–186; it reads YYESTYV. The chain crosses the membrane as a helical span at residues 187–211; sequence VICLIAMFLTMLLLMASLYTHMFLL. Topologically, residues 212-239 are cytoplasmic; the sequence is ARTHIRRIATLPGHSSVRQRTGVKGAIT. The chain crosses the membrane as a helical span at residues 240–265; that stretch reads LAMLLGVFIVCWAPFFLHLILMISCP. At 266-273 the chain is on the extracellular side; it reads HNLYCSCF. The helical transmembrane segment at 274–297 threads the bilayer; that stretch reads MSHFNMYLILIMCNSVIDPLIYAF. At 298–325 the chain is on the cytoplasmic side; it reads RSQEMRKTFKEIVCFQSFRTPCRFPSRY. A lipid anchor (S-palmitoyl cysteine) is attached at Cys311.

It belongs to the G-protein coupled receptor 1 family.

The protein localises to the cell membrane. Its function is as follows. Receptor for MSH (alpha, beta and gamma) and ACTH. The activity of this receptor is mediated by G proteins which activate adenylate cyclase. This receptor is a possible mediator of the immunomodulation properties of melanocortins. In Bos taurus (Bovine), this protein is Melanocortin receptor 5 (MC5R).